We begin with the raw amino-acid sequence, 428 residues long: Chaperone SurA (428 aa).

An N-terminal signal peptide occupies residues 1–20 (MKNWKTLLLGIAMIANTSFA). PpiC domains follow at residues 171–272 (STEL…KVND) and 282–382 (VTEV…ELLD).

It is found in the periplasm. The catalysed reaction is [protein]-peptidylproline (omega=180) = [protein]-peptidylproline (omega=0). Chaperone involved in the correct folding and assembly of outer membrane proteins. Recognizes specific patterns of aromatic residues and the orientation of their side chains, which are found more frequently in integral outer membrane proteins. May act in both early periplasmic and late outer membrane-associated steps of protein maturation. The polypeptide is Chaperone SurA (Escherichia coli O157:H7).